Consider the following 262-residue polypeptide: Sperm microtubule inner protein 6 (262 aa).

This sequence belongs to the SPMIP6 family. Microtubule inner protein component of sperm flagellar doublet microtubules. Interacts with alpha-tubulin. In terms of tissue distribution, expressed in testis. Strongly expressed in ciliated epithelial cells with lower levels in goblet cells (at protein level).

It is found in the cytoplasm. The protein localises to the cytoskeleton. It localises to the nucleus. The protein resides in the mitochondrion. Its subcellular location is the flagellum axoneme. Functionally, may participate in intramanchette transport and midpiece formation of the sperm tail. May play a potential role in somatic cell proliferation. The chain is Sperm microtubule inner protein 6 from Homo sapiens (Human).